A 71-amino-acid polypeptide reads, in one-letter code: UPF0352 protein Asuc_0778 (71 aa).

It belongs to the UPF0352 family.

The polypeptide is UPF0352 protein Asuc_0778 (Actinobacillus succinogenes (strain ATCC 55618 / DSM 22257 / CCUG 43843 / 130Z)).